A 412-amino-acid polypeptide reads, in one-letter code: Gamma-glutamyl phosphate reductase (412 aa).

The protein belongs to the gamma-glutamyl phosphate reductase family.

Its subcellular location is the cytoplasm. It carries out the reaction L-glutamate 5-semialdehyde + phosphate + NADP(+) = L-glutamyl 5-phosphate + NADPH + H(+). The protein operates within amino-acid biosynthesis; L-proline biosynthesis; L-glutamate 5-semialdehyde from L-glutamate: step 2/2. Catalyzes the NADPH-dependent reduction of L-glutamate 5-phosphate into L-glutamate 5-semialdehyde and phosphate. The product spontaneously undergoes cyclization to form 1-pyrroline-5-carboxylate. This is Gamma-glutamyl phosphate reductase from Lactiplantibacillus plantarum (strain ATCC BAA-793 / NCIMB 8826 / WCFS1) (Lactobacillus plantarum).